The chain runs to 1159 residues: Ferroxidase HEPHL1 (1159 aa).

An N-terminal signal peptide occupies residues 1 to 23; sequence MFLKQPGGCILLQFLGLLGLVGA. 6 consecutive Plastocyanin-like domains span residues 24 to 206, 217 to 365, 378 to 560, 570 to 718, 730 to 906, and 914 to 1092; these read VTRT…LLVC, MRTD…VGNC, QRRY…LLVC, TQKG…ISSC, MLRT…LITC, and KGRR…VPSQ. Topologically, residues 24 to 1114 are extracellular; sequence VTRTYYIGIV…KNLRPRGAKA (1091 aa). 2 residues coordinate Cu cation: His-126 and His-128. A glycan (N-linked (GlcNAc...) asparagine) is linked at Asn-160. A disulfide bridge links Cys-180 with Cys-206. Residues His-186 and His-188 each coordinate Cu cation. N-linked (GlcNAc...) asparagine glycosylation is present at Asn-235. Residues Cys-284 and Cys-365 are joined by a disulfide bond. Cu cation-binding residues include His-303, Cys-346, and His-351. The N-linked (GlcNAc...) asparagine glycan is linked to Asn-406. A disulfide bridge connects residues Cys-534 and Cys-560. Residue Asn-588 is glycosylated (N-linked (GlcNAc...) asparagine). Residues Cys-637 and Cys-718 are joined by a disulfide bond. 4 residues coordinate Cu cation: His-656, Cys-699, His-704, and Met-709. A glycan (N-linked (GlcNAc...) asparagine) is linked at Asn-771. An intrachain disulfide couples Cys-880 to Cys-906. The N-linked (GlcNAc...) asparagine glycan is linked to Asn-934. Residues His-1002, His-1005, His-1007, His-1047, Cys-1048, His-1049, His-1053, and Met-1058 each contribute to the Cu cation site. A helical transmembrane segment spans residues 1115–1135; the sequence is ALVILFILGLLLLVATVVLAL. At 1136–1159 the chain is on the cytoplasmic side; sequence RLRSSRRQMAYREVQSCALPTDAL.

The protein belongs to the multicopper oxidase family. Cu cation serves as cofactor.

It is found in the membrane. The enzyme catalyses 4 Fe(2+) + O2 + 4 H(+) = 4 Fe(3+) + 2 H2O. Its function is as follows. Is a copper-binding glycoprotein with ferroxidase activity. It oxidizes Fe(2+) to Fe(3+) without releasing radical oxygen species. May be involved in the regulation of intracellular iron content. This is Ferroxidase HEPHL1 (Hephl1) from Mus musculus (Mouse).